A 2797-amino-acid polypeptide reads, in one-letter code: MYHQLESHGVFPTLGDDAAKLVRTTHVQEIAFTPISEIQRFCEAQNISCDSFYLNVWSLVLRAFAETNSVCVGFGDFRPSGARLDQALFKILQTTLSPKSSILSILQGFKQDERAFSVNHREPAHNTGVVFISEASGPLDLASLGKLKYDLLMVVSFDSKSIPISLFLVYRPSTLSQSHAENLSSNITQAMQQVLARPNSFVNDVELFSTFNKSLVLCWNGLERKAASLLEVIQGHVRSRPDHPAICAWDGTISYSQLDMLTTQWASYLQSRGVQPGCLVPIMMEHSKWAIIGEIAILKAGAAFVPIDPAHPVSRLKGIVQRTKANIAVSSGHLIDKLSSLVDTVVEISDQTTSGLPEAVRHGAANPVPFDRTAYVLFTSGSTGQPKGCVVSYRALSDVVHQTTALNIDSESRVLQFASYTYGMSLIEVHCTLAAGATICIPSDYHRLNALSSAIQSTQVTWAILTASTTLTIAETARYLRTLVVAGEPMGIDHVRSLADKVELLQAFGLTEWGGICCVSQRIRSEGDVRLIGRSPTANLWLIDPTDGSKLAPVGAAAELFVEGPALADGYLEDPHQTAAVFIKRPPWIPAPTGVRLYRTGDLVRYTGDGNLLYIARKDSQVKIRGMRVELGEVEYQIRQAFPALGEAIAVATTTKESSGMPILAAFLHMENQLDLSGQSFSHMIDTIKTSLRKTLPDYMWPSIYIPLDSVPLTISRKIDRKDLQLRVQKSTRMELEENQVSSACIVAPLTDTERHVHRFVAELLHLDPLSFGMNQNFINLGGDSVSAMRLVNKCKYQGYRVTVGEILEVRTLSDIVSLVRTATTSSSVPSAGAEISRSDAPTESPATGSFEGSGYTTIPRLSQSGPIEQSFSQARMWFLEELHPGSSWYILPYATRLQGPLQLDHLEAALSALSERHETLRTTFESRDGTGLQIVAPFRPKPLEVIEVTSDSSIAALRTALQEQMKPFDLTKDTWRSAVLRLSPTDHVFSVVFHHIISDGWSVDVFMKTLETFYSAVIRGQPPLHITKPLQIQYRDFSIWQRQEQSRIHQKQIAYWIQQLHGSKPAEFLCDKPRPTKPSIAAGSMDVKIDGELYQALQGFCRSRQVTPFTTLLAAFRTTHYRLTGASDATIGIPSASRTRPELEELIGYFGNVQCIRTVIDSRGQSFQQLVQQVQSATTAASQNQDVPFDQVVSRLLKDRDMSRHPLVQVTFVLHPQANFGQLHLEGLRAEHLHLPQVTRLDLEFHLYPGDGCLQGDILYSADLFNPETIRTLRSVFYDVLSEGLCHPDIEIGSLLLTDAYPVLDQRGLIYTAHEAPFQGCSIIDMFHQQVAAHGDQMAIKDTHTQLTYCELDRRSDMLATWLKNSFLFVEETPVGVFGNRSCESIVTILGILKAGLAYVPLDADAPPQRTEMILSCLPSCQLVLLLSGLMAPPTLPSNIKFAYVSNSSDVKVEEVDAFLTHTPTPRATNLAYIVFTSGTTGTPKGVMVEHRGVVRLAKDPEIVAHTRDFKVASHVLNPAFDASGFEVYATLLNGGTLVCIDKNIVWDYAALGATLVKHGVQRAFFTTAVLKQCLLSAPYIMSDLEILYVGGDKLDPHDMAVARRFGKVRIFNVYGPTENSVVSTRYAIPDGEAAVNGMPIGRSIAGSGAYVMDPNLRLVPIGAMGELVVTGLGLARGYTNPEQNIGRFVTVSIGGQVVHAYRTGDMVRYRPSDAQLEFFGRMDQQVKIRGYRVELAEIDNALALNSLVSSAVTVLQTQEDQEQELVSFVTIQDTAANVENLEEHISNAHVNSWKDHAEGGDHYGKLGAVDPATLGRDFLGWVSMYDGEAIDTEVMTEWLEDTIAAIHLCDAASALEIGTGTGMILFNLIDSLKEYYGLEPSRQAVEFVQRAVRCVPKAASKVRIQQGTASALVGLKATGPIDLAVVNSVAQYFPSAKYMTRVIKQLIQLHDLNCIFFGDIRSYGLYEEFQASKVLHLYGHTLSAREFSQKMAEIVQLEKELLIDPAFFTALATEFPELIEHVEIMPKRMKTTNELSCYRYTAILHIRRPSQSLLVHEVEQSSWLDFEASGLDYRSLTQMLKTSNDVSVLAFSNIPFKKTIMERHVVNFLRHLPTGAGSAGWSMDVCQQALVCPAIDATELIDVAQLTGWQVEISWARQHSQFGGLDAIFHRLKPEDNGSRVFFQFPTDHGRRGLSCAFSNDPLALQRNQRIENELLENLRARLPSYMVPKRIRVLDRMPINNIGKVDRQALAKRVDIPPPAGVLTARSSPRNDMSFTDDIERAMWEEFAGVLGVEVGIADSFFDCGGHSLMAIKLVSRINKRLQSTVPVSDLFQYPSVSRLAGRVRGFRAPSNSTVSYQPFSLLPGSLSRLPYIDSPYGSEPHLPPSTEIIDMLPVTESQAWFLADWSLVSHSFRIEGALDVDGLRAACQAVVRHHATLRTVFTKLLGRLVQVVCGSVDAPFAHVYTDGDLESECRSLCAADGGAPSGLTTGFTLLSRSTIEHIFILRFSHAQYDGISLSSILSDLAAAYAGTAPLPTTAPFSGYVHVAALSRSVALDFWKKYLEGSVLTTLRPSNTAINARVVDLTREAVGKLHQLADITFPTIVNAAIAITLASLVKRNDVTFACVMSSRGVLSQGADSVQGPCVNRTLIRVQLSPDSTALGFCRGLRKNQARVSAENHLELGDVLENCTSWSSSDRLAPWITHLPADKATSTLALPGACITYRSTDVRINPRNQILVRSVITDQQQACIQVQVSSTVMDGSYAFSLASKILNTAQALSMSAERTLSSIDVHE.

Residues 239–625 form an adenylation 1 region; it reads SRPDHPAICA…ARKDSQVKIR (387 aa). Residues 751–824 form the Carrier 1 domain; that stretch reads TDTERHVHRF…DIVSLVRTAT (74 aa). Ser-785 bears the O-(pantetheine 4'-phosphoryl)serine mark. Positions 830–856 are disordered; the sequence is PSAGAEISRSDAPTESPATGSFEGSGY. Positions 870–1299 are condensation 1; that stretch reads QSFSQARMWF…DIEIGSLLLT (430 aa). Positions 1328–1731 are adenylation 2; sequence FHQQVAAHGD…GRMDQQVKIR (404 aa). Residues 1857–1953 are methyltransferase; it reads LEIGTGTGMI…VIKQLIQLHD (97 aa). Residues 2277-2351 enclose the Carrier 2 domain; that stretch reads SFTDDIERAM…RLAGRVRGFR (75 aa). Position 2311 is an O-(pantetheine 4'-phosphoryl)serine (Ser-2311). Positions 2516–2658 are condensation 2; the sequence is YDGISLSSIL…VNRTLIRVQL (143 aa).

It belongs to the NRP synthetase family.

It carries out the reaction O-methyl-L-tyrosine + anthranilate + S-adenosyl-L-methionine + 2 ATP = (-)-4'-methoxycyclopeptine + 2 AMP + S-adenosyl-L-homocysteine + 2 diphosphate + 2 H(+). It catalyses the reaction anthranilate + L-phenylalanine + S-adenosyl-L-methionine + 2 ATP = cyclopeptine + 2 AMP + S-adenosyl-L-homocysteine + 2 diphosphate + 2 H(+). The protein operates within secondary metabolite biosynthesis. It participates in alkaloid biosynthesis. Its pathway is mycotoxin biosynthesis. Its function is as follows. Nonribosomal peptide synthetase; part of the gene cluster that mediates the biosynthesis of penigequinolones, potent insecticidal alkaloids that contain a highly modified 10-carbon prenyl group. The first stage is catalyzed by the nonribosomal peptide synthetase penN that condenses anthranilic acid and O-methyl-L-tyrosine to produce 4'-methoxycyclopeptin. 4'-methoxycyclopeptin is then converted to 4'-methoxydehydrocyclopeptin by the ketoglutarate-dependent dioxygenase penM through dehydrogenation to form a double bond between C-alpha and C-beta of the O-methyltyrosine side chain. PenM also converts its first product methoxydehydrocyclopeptin to 4'-methoxycyclopenin. The following conversion of 4'methoxycyclopenin into 4'-methoxyviridicatin is catalyzed by the cyclopenase penL. 4'-methoxyviridicatin is the precursor of quinolone natural products, and is further converted to quinolinone B. The prenyltransferase penI then catalyzes the canonical Friedel-Crafts alkylation of quinolinone B with dimethylallyl cation to yield dimethylallyl quinolone, which is subjected to FAD-dependent dehydrogenation by the FAD-linked oxidoreductase penH to yield conjugated aryl diene. The delta(3') double bond then serves as the site of the second alkylation with DMAPP catalyzed by the prenyltransferase penG to yield a carbenium ion intermediate, which can be attacked by H(2)O to yield a styrenyl quinolone containing a C3'-hydroxyprenyl chain, or undergo cyclization to yield yaequinolones J1 and J2. The conversion of the styrenyl quinolone into the tetrahydrofuran-containing yaequinolone C is performed by the FAD-dependent monooxygenase penE and involves epoxidation of the terminal C7'-C8' olefin, followed by epoxide ring opening initiated by the C3' hydroxyl group. The predicted cysteine hydrolase penJ acts as an epoxide hydrolase that enhances the rate of the 5-exo-tet cyclization step, increasing the yield of yaequinolone C. PenF catalyzes the cationic rearrangement of the epoxide formed by penE (before ring opening to produce yaequinolone C) into yaequinolone D. Finally, the short-chain dehydrogenase/reductase (SDR)-like reductase penD, catalyzes both the dehydration of yaequinolone D and the reduction of the resulting oxonium to yield penigequinolone. The sequence is that of Nonribosomal peptide synthetase penN from Penicillium thymicola.